The following is a 259-amino-acid chain: MNKINNNLEFNGNEDEHFIEYYNNKNYKSDLLKANKNNKTKNKKNSNFNFKSIEKNRLNYNNKKNKFILNRKAYYNSNENINCQSDIIYVEENITVNELASKIGVEATEILKVLFKKGKLLNINQILDLSLLNLISQELKINITTIDKKNNIYINTESNNDQNINDKHVKLRAPIVAVLGHVNHGKTSLIEKLIKNDLTKAETGHITQHIGAYEFIIGPKDKKIILLDTPGHEAFESIRQRVLKISDIILLIIAADEGI.

The tr-type G domain maps to 171–259; that stretch reads LRAPIVAVLG…LLIIAADEGI (89 aa). 180-187 contacts GTP; that stretch reads GHVNHGKT.

The protein belongs to the TRAFAC class translation factor GTPase superfamily. Classic translation factor GTPase family. IF-2 subfamily.

It is found in the plastid. The protein resides in the chloroplast. Its function is as follows. One of the essential components for the initiation of protein synthesis. Protects formylmethionyl-tRNA from spontaneous hydrolysis and promotes its binding to the 30S ribosomal subunits. Also involved in the hydrolysis of GTP during the formation of the 70S ribosomal complex. This Galdieria sulphuraria (Red alga) protein is Translation initiation factor IF-2, chloroplastic (infB).